The sequence spans 231 residues: MDVFVKILSDFGFTRLSSSLHVPIVVHCMPGAGKSSCIRALLKADSRFVAYTLGVPDPCNLDGLCIKAFTGSVDLKYFNILDEYARYNGDASDFFALFGDPVQSPPRNLYRAHFKAVLSKRFGSCTAQLLRELGFEVESTKEDLVSIRGLYDFDPVGTVIYYEKEIGCLLRAHSIEAYEPEEVVGKTFETVTFVTAENHIPAESRHLVYQCLTRHRSVLHLMTPDASYTST.

Residues 1–123 (MDVFVKILSD…FKAVLSKRFG (123 aa)) enclose the (+)RNA virus helicase ATP-binding domain. One can recognise a (+)RNA virus helicase C-terminal domain in the interval 124–231 (SCTAQLLREL…MTPDASYTST (108 aa)).

Belongs to the Tymovirales TGBp1 protein family. Homodimer and homooligomer. Interacts with capsid protein. Interacts with host AGO1; this interaction targets the host protein for degradation, thereby suppressing the antiviral RNA silencing.

The protein localises to the host cytoplasm. Transports viral genome to neighboring plant cells directly through plasmosdesmata, without any budding. The movement protein allows efficient cell to cell propagation, by bypassing the host cell wall barrier. Increases plasmodesma size exclusion limit. Acts as a suppressor of RNA-mediated gene silencing, also known as post-transcriptional gene silencing (PTGS), a mechanism of plant viral defense that limits the accumulation of viral RNAs. This is Movement and silencing protein TGBp1 from Chrysanthemum morifolium (Florist's daisy).